Consider the following 322-residue polypeptide: tRNA U34 carboxymethyltransferase (322 aa).

Carboxy-S-adenosyl-L-methionine is bound by residues Lys-90, Trp-104, Lys-109, Gly-129, 151–153 (DPS), 180–181 (IE), Met-196, Tyr-200, and Arg-315.

Belongs to the class I-like SAM-binding methyltransferase superfamily. CmoB family. Homotetramer.

The catalysed reaction is carboxy-S-adenosyl-L-methionine + 5-hydroxyuridine(34) in tRNA = 5-carboxymethoxyuridine(34) in tRNA + S-adenosyl-L-homocysteine + H(+). Functionally, catalyzes carboxymethyl transfer from carboxy-S-adenosyl-L-methionine (Cx-SAM) to 5-hydroxyuridine (ho5U) to form 5-carboxymethoxyuridine (cmo5U) at position 34 in tRNAs. This is tRNA U34 carboxymethyltransferase from Cellvibrio japonicus (strain Ueda107) (Pseudomonas fluorescens subsp. cellulosa).